A 248-amino-acid polypeptide reads, in one-letter code: Probable transcriptional regulatory protein Acid_5948 (248 aa).

The protein belongs to the TACO1 family.

It is found in the cytoplasm. The protein is Probable transcriptional regulatory protein Acid_5948 of Solibacter usitatus (strain Ellin6076).